The following is a 3616-amino-acid chain: Replicase polyprotein 1ab (3616 aa).

Residues 8–28 form a C4-type; atypical zinc finger; that stretch reads CLCTPNARVFWEHGQVYCTRC. In terms of domain architecture, Peptidase C31 spans 69-181; the sequence is ECRPGGLCWL…KGLCPFSDAR (113 aa). Residues cysteine 76 and histidine 147 each act as for Nsp1-alpha papain-like cysteine proteinase activity in the active site. One can recognise a Peptidase C32 domain in the interval 262-381; that stretch reads NDTKFSKCWE…FRFQTRKYYG (120 aa). Residues cysteine 269 and histidine 340 each act as for Nsp1-beta papain-like cysteine proteinase activity in the active site. Positions 381-486 constitute a Peptidase C33 domain; the sequence is GYSPPGDGAC…RGVCGGECKF (106 aa). Catalysis depends on for Nsp2 cysteine proteinase activity residues cysteine 390 and histidine 456. Disordered stretches follow at residues 672-706 and 883-912; these read SRALKSAKPKRKRNKKKKTSSPTPTPPETPTREVP and PLKSGAEPTPSKRDLGVSLGDQLSQDGAPR. Positions 676–690 are enriched in basic residues; that stretch reads KSAKPKRKRNKKKKT. Polar residues predominate over residues 903–912; it reads DQLSQDGAPR. 9 helical membrane passes run 942–962, 977–997, 1010–1030, 1060–1080, 1085–1105, 1289–1309, 1364–1384, 1386–1406, and 1425–1445; these read WLNHQVFLLSSHLLAMWSVVL, LFCLCCVLLCFHFPAIGFIPL, LSVFSVWLCVAVVVFQEVLPE, HIGVGLVGTVAGFVARVVGGP, FYFLRLMVVLDLGLVFLAVAL, VADFVCLGLYVMLNFLISAWL, ALMIAVIATVAIFIAKVSLLV, VICVFLCLLMYVFPPLSVIAF, and VQFFLLAVNFWAGVAVAVILI. The interval 981–1105 is HD1; it reads CCVLLCFHFP…LGLVFLAVAL (125 aa). Residues 1289–1448 form an HD2 region; that stretch reads VADFVCLGLY…AVAVILISSW (160 aa). Positions 1513–1714 constitute a Peptidase S32 domain; the sequence is GSLRTRGCAK…AVVESLPTPE (202 aa). Active-site charge relay system; for 3C-like serine proteinase activity residues include histidine 1551, aspartate 1576, and serine 1628. Helical transmembrane passes span 1715–1735, 1737–1757, 1761–1781, and 1832–1852; these read GALSSVQLLCVFFFLWRLIHV, FVPVIAVAFFFLNEILPVVLA, FSFALSLFSVFTGFSVQVLLL, and SKEIFVTLLAIHVLALLLSLF. Residues 1737-1852 form an HD3 region; that stretch reads FVPVIAVAFF…HVLALLLSLF (116 aa). A NiRAN domain is found at 2194 to 2352; sequence SLNGLQQSSA…LPYKLHPVRG (159 aa). The RdRp catalytic domain maps to 2590-2724; sequence GRCLEADLAS…YNESDELPNY (135 aa). An AV ZBD domain is found at 2844 to 2907; the sequence is KKKCRTCAHC…SSAMNLNTEL (64 aa). Cysteine 2850, cysteine 2853, cysteine 2863, cysteine 2868, histidine 2871, histidine 2873, histidine 2875, histidine 2877, cysteine 2884, histidine 2886, cysteine 2893, and cysteine 2896 together coordinate Zn(2+). Positions 2964-3116 constitute a (+)RNA virus helicase ATP-binding domain; the sequence is QVMKVAQTCA…AFSLMPGRQL (153 aa). Position 2992–2999 (2992–2999) interacts with ATP; the sequence is GAPGTGKT. Residues 3117–3248 form the (+)RNA virus helicase C-terminal domain; the sequence is IEVFRFGPAV…CGDQPKMIVG (132 aa). Residues 3272-3368 enclose the AV-Nsp11N/CoV-Nsp15M domain; that stretch reads EGTASPLPQV…LTKYLKGESV (97 aa). The NendoU domain maps to 3370 to 3492; sequence LPDSIMSTGR…MVWKDATAYF (123 aa).

This sequence belongs to the arteriviridae polyprotein family. In terms of processing, specific enzymatic cleavages in vivo by its own proteases yield mature proteins. There are two alternative pathways for processing. Either nsp4-5 is cleaved, which represents the major pathway or the nsp5-6 and nsp6-7 are processed, which represents the minor pathway. The major pathway occurs when nsp2 acts as a cofactor for nsp4.

It is found in the host membrane. Its subcellular location is the host cytoplasm. It localises to the host perinuclear region. The enzyme catalyses RNA(n) + a ribonucleoside 5'-triphosphate = RNA(n+1) + diphosphate. It carries out the reaction ATP + H2O = ADP + phosphate + H(+). It catalyses the reaction uridylyl-uridylyl-ribonucleotide-RNA = a 3'-end uridylyl-2',3'-cyclophospho-uridine-RNA + a 5'-end dephospho-ribonucleoside-RNA. Its function is as follows. The replicase polyprotein 1ab is a multifunctional protein: it contains the activities necessary for the transcription of negative stranded RNA, leader RNA, subgenomic mRNAs and progeny virion RNA as well as proteinases responsible for the cleavage of the polyprotein into functional products. Functionally, the Nsp1 chain is essential for viral subgenomic mRNA synthesis. In terms of biological role, the 3C-like serine proteinase chain is responsible for the majority of cleavages as it cleaves the C-terminus of the polyprotein. The helicase chain, which contains a zinc finger structure, displays RNA and DNA duplex-unwinding activities with 5' to 3' polarity. Its function is as follows. Plays a role in viral transcription/replication and prevents the simultaneous activation of host cell dsRNA sensors, such as MDA5/IFIH1, OAS, and PKR. Acts by degrading the 5'-polyuridines generated during replication of the poly(A) region of viral genomic and subgenomic RNAs. Catalyzes a two-step reaction in which a 2'3'-cyclic phosphate (2'3'-cP) is first generated by 2'-O transesterification, which is then hydrolyzed to a 3'-phosphate (3'-P). If not degraded, poly(U) RNA would hybridize with poly(A) RNA tails and activate host dsRNA sensors. This Mus musculus domesticus (western European house mouse) protein is Replicase polyprotein 1ab (rep).